Reading from the N-terminus, the 21-residue chain is Cupiennin-6b (21 aa).

A Serine amide modification is found at serine 21.

As to expression, expressed by the venom gland.

The protein localises to the secreted. The polypeptide is Cupiennin-6b (Cupiennius salei (American wandering spider)).